Reading from the N-terminus, the 2233-residue chain is Acetyl-CoA carboxylase (2233 aa).

Residue Ser-2 is modified to N-acetylserine. Ser-2 carries the phosphoserine modification. In terms of domain architecture, Biotin carboxylation spans 58-567; the sequence is VISKILIANN…TTGWLDDLIT (510 aa). Residues 216 to 408 enclose the ATP-grasp domain; the sequence is KTGLVSVDDD…LPAAQLQIAM (193 aa). ATP is bound at residue 256–261; that stretch reads GGGGKG. Positions 365, 379, and 381 each coordinate Mn(2+). The active site involves Arg-383. Positions 694-768 constitute a Biotinyl-binding domain; the sequence is LEVENDPTQL…VAGDIMAIMT (75 aa). The residue at position 735 (Lys-735) is an N6-biotinyllysine. Residues Ser-790, Ser-1148, Ser-1157, and Ser-1162 each carry the phosphoserine modification. One can recognise a CoA carboxyltransferase N-terminal domain in the interval 1486–1822; that stretch reads PYPVKEWLQP…KRNMPVPILE (337 aa). The carboxyltransferase stretch occupies residues 1486 to 2141; it reads PYPVKEWLQP…EEYLIKRLSH (656 aa). Acetyl-CoA is bound at residue 1627 to 1629; sequence ARI. A CoA-binding site is contributed by Arg-1731. The region spanning 1826-2141 is the CoA carboxyltransferase C-terminal domain; the sequence is TWDRPVDFTP…EEYLIKRLSH (316 aa). Gly-1998 contacts acetyl-CoA. Lys-2034 and Arg-2036 together coordinate CoA.

In terms of assembly, homodimer. Biotin serves as cofactor. Mn(2+) is required as a cofactor.

It is found in the cytoplasm. The protein resides in the endoplasmic reticulum membrane. It catalyses the reaction hydrogencarbonate + acetyl-CoA + ATP = malonyl-CoA + ADP + phosphate + H(+). It carries out the reaction N(6)-biotinyl-L-lysyl-[protein] + hydrogencarbonate + ATP = N(6)-carboxybiotinyl-L-lysyl-[protein] + ADP + phosphate + H(+). Its pathway is lipid metabolism; malonyl-CoA biosynthesis; malonyl-CoA from acetyl-CoA: step 1/1. Its activity is regulated as follows. By phosphorylation. The catalytic activity is inhibited by soraphen A, a polyketide isolated from the myxobacterium Sorangium cellulosum and a potent inhibitor of fungal growth. In terms of biological role, carries out three functions: biotin carboxyl carrier protein, biotin carboxylase and carboxyltransferase. Involved in the synthesis of very-long-chain fatty acid synthesis which is required to maintain a functional nuclear envelope. Required for acylation and vacuolar membrane association of VAC8 which is necessary to maintain a normal morphology of the vacuole. The polypeptide is Acetyl-CoA carboxylase (ACC1) (Saccharomyces cerevisiae (strain ATCC 204508 / S288c) (Baker's yeast)).